We begin with the raw amino-acid sequence, 1548 residues long: Zinc finger MYM-type protein 4 (1548 aa).

N-acetylalanine is present on Ala2. Thr107 bears the Phosphothreonine mark. Phosphoserine occurs at positions 110 and 122. Residues Lys140 and Lys149 each participate in a glycyl lysine isopeptide (Lys-Gly) (interchain with G-Cter in SUMO2) cross-link. Ser162 is modified (phosphoserine). Positions Ser162–Asp189 are disordered. Lys195 participates in a covalent cross-link: Glycyl lysine isopeptide (Lys-Gly) (interchain with G-Cter in SUMO2). At Ser197 the chain carries Phosphoserine. Residues Lys201 and Lys232 each participate in a glycyl lysine isopeptide (Lys-Gly) (interchain with G-Cter in SUMO2) cross-link. Ser242 bears the Phosphoserine mark. Lys250 participates in a covalent cross-link: Glycyl lysine isopeptide (Lys-Gly) (interchain with G-Cter in SUMO1); alternate. Residue Lys250 forms a Glycyl lysine isopeptide (Lys-Gly) (interchain with G-Cter in SUMO2); alternate linkage. Glycyl lysine isopeptide (Lys-Gly) (interchain with G-Cter in SUMO2) cross-links involve residues Lys260, Lys271, Lys273, Lys289, Lys327, Lys400, Lys428, and Lys430. 9 consecutive MYM-type zinc fingers follow at residues Gln362–Val402, Lys414–Val457, His464–Gln499, Lys510–Ile544, Glu554–Leu592, Arg600–Gly631, Phe708–Val742, Lys749–Asn788, and Glu795–Leu829. Phosphoserine is present on Ser1030. Glycyl lysine isopeptide (Lys-Gly) (interchain with G-Cter in SUMO2) cross-links involve residues Lys1035 and Lys1061. Ser1064 and Ser1071 each carry phosphoserine. Residues Lys1080 and Lys1127 each participate in a glycyl lysine isopeptide (Lys-Gly) (interchain with G-Cter in SUMO2) cross-link. Positions Ser1124 to Thr1134 are enriched in basic and acidic residues. Disordered regions lie at residues Ser1124–Val1183 and Lys1231–Ser1260. Residues Ser1160–Ser1181 are compositionally biased toward basic residues. Ser1181 and Ser1256 each carry phosphoserine. Positions Gln1237–Ser1260 are enriched in polar residues. Residue Lys1431 forms a Glycyl lysine isopeptide (Lys-Gly) (interchain with G-Cter in SUMO2) linkage. Ser1539, Ser1542, and Ser1547 each carry phosphoserine.

As to expression, expressed at higher level in heart, skeletal muscle, kidney and liver.

Functionally, plays a role in the regulation of cell morphology and cytoskeletal organization. The sequence is that of Zinc finger MYM-type protein 4 (ZMYM4) from Homo sapiens (Human).